The primary structure comprises 55 residues: Small ribosomal subunit protein bS21 (55 aa).

The protein belongs to the bacterial ribosomal protein bS21 family.

The sequence is that of Small ribosomal subunit protein bS21 from Ureaplasma parvum serovar 3 (strain ATCC 27815 / 27 / NCTC 11736).